Consider the following 905-residue polypeptide: Protein translocase subunit SecA (905 aa).

ATP is bound by residues Gln-87, Gly-105–Thr-109, and Asp-512. The tract at residues Arg-565 to Ser-584 is disordered. Cys-886, Cys-888, Cys-897, and His-898 together coordinate Zn(2+).

This sequence belongs to the SecA family. As to quaternary structure, monomer and homodimer. Part of the essential Sec protein translocation apparatus which comprises SecA, SecYEG and auxiliary proteins SecDF-YajC and YidC. It depends on Zn(2+) as a cofactor.

Its subcellular location is the cell inner membrane. It is found in the cytoplasm. It catalyses the reaction ATP + H2O + cellular proteinSide 1 = ADP + phosphate + cellular proteinSide 2.. Functionally, part of the Sec protein translocase complex. Interacts with the SecYEG preprotein conducting channel. Has a central role in coupling the hydrolysis of ATP to the transfer of proteins into and across the cell membrane, serving both as a receptor for the preprotein-SecB complex and as an ATP-driven molecular motor driving the stepwise translocation of polypeptide chains across the membrane. This is Protein translocase subunit SecA from Haemophilus ducreyi (strain 35000HP / ATCC 700724).